We begin with the raw amino-acid sequence, 182 residues long: ATP synthase subunit delta (182 aa).

The protein belongs to the ATPase delta chain family. As to quaternary structure, F-type ATPases have 2 components, F(1) - the catalytic core - and F(0) - the membrane proton channel. F(1) has five subunits: alpha(3), beta(3), gamma(1), delta(1), epsilon(1). F(0) has three main subunits: a(1), b(2) and c(10-14). The alpha and beta chains form an alternating ring which encloses part of the gamma chain. F(1) is attached to F(0) by a central stalk formed by the gamma and epsilon chains, while a peripheral stalk is formed by the delta and b chains.

Its subcellular location is the cell membrane. With respect to regulation, increases 2-fold following exposure to low pH. Functionally, f(1)F(0) ATP synthase produces ATP from ADP in the presence of a proton or sodium gradient. F-type ATPases consist of two structural domains, F(1) containing the extramembraneous catalytic core and F(0) containing the membrane proton channel, linked together by a central stalk and a peripheral stalk. During catalysis, ATP synthesis in the catalytic domain of F(1) is coupled via a rotary mechanism of the central stalk subunits to proton translocation. Its function is as follows. This protein is part of the stalk that links CF(0) to CF(1). It either transmits conformational changes from CF(0) to CF(1) or is implicated in proton conduction. The polypeptide is ATP synthase subunit delta (Lactobacillus acidophilus (strain ATCC 700396 / NCK56 / N2 / NCFM)).